The primary structure comprises 238 residues: LexA repressor (238 aa).

Residues 26 to 46 constitute a DNA-binding region (H-T-H motif); sequence FDEMKDALDLASKSGIHRLIT. Catalysis depends on for autocatalytic cleavage activity residues Ser158 and Lys196.

The protein belongs to the peptidase S24 family. As to quaternary structure, homodimer.

The catalysed reaction is Hydrolysis of Ala-|-Gly bond in repressor LexA.. Functionally, represses a number of genes involved in the response to DNA damage (SOS response), including recA and lexA. In the presence of single-stranded DNA, RecA interacts with LexA causing an autocatalytic cleavage which disrupts the DNA-binding part of LexA, leading to derepression of the SOS regulon and eventually DNA repair. In Sinorhizobium medicae (strain WSM419) (Ensifer medicae), this protein is LexA repressor.